The chain runs to 399 residues: uncharacterized protein (399 aa).

The next 10 membrane-spanning stretches (helical) occupy residues His6–Pro26, Lys27–Leu47, Leu60–Asp80, Ile111–Phe131, Met147–Ile167, Ser173–Ala193, Gly195–Ile215, Ile220–Phe240, Gly328–Lys348, and Ile362–Ala382.

The protein resides in the cell membrane. This is an uncharacterized protein from Haemophilus influenzae (strain ATCC 51907 / DSM 11121 / KW20 / Rd).